Consider the following 581-residue polypeptide: Probable peptidoglycan D,D-transpeptidase PenA (581 aa).

Residues 28-48 (ISFVLMAMAVLFACLIARGLY) traverse the membrane as a helical segment. Serine 310 functions as the Acyl-ester intermediate in the catalytic mechanism.

This sequence belongs to the transpeptidase family. FtsI subfamily.

The protein resides in the cell inner membrane. It carries out the reaction Preferential cleavage: (Ac)2-L-Lys-D-Ala-|-D-Ala. Also transpeptidation of peptidyl-alanyl moieties that are N-acyl substituents of D-alanine.. It participates in cell wall biogenesis; peptidoglycan biosynthesis. Its function is as follows. Catalyzes cross-linking of the peptidoglycan cell wall at the division septum. In Neisseria gonorrhoeae, this protein is Probable peptidoglycan D,D-transpeptidase PenA.